Consider the following 1342-residue polypeptide: DNA-directed RNA polymerase subunit beta (1342 aa).

Lysine 1022 and lysine 1200 each carry N6-acetyllysine.

It belongs to the RNA polymerase beta chain family. As to quaternary structure, the RNAP catalytic core consists of 2 alpha, 1 beta, 1 beta' and 1 omega subunit. When a sigma factor is associated with the core the holoenzyme is formed, which can initiate transcription.

The catalysed reaction is RNA(n) + a ribonucleoside 5'-triphosphate = RNA(n+1) + diphosphate. Its function is as follows. DNA-dependent RNA polymerase catalyzes the transcription of DNA into RNA using the four ribonucleoside triphosphates as substrates. The chain is DNA-directed RNA polymerase subunit beta from Escherichia fergusonii (strain ATCC 35469 / DSM 13698 / CCUG 18766 / IAM 14443 / JCM 21226 / LMG 7866 / NBRC 102419 / NCTC 12128 / CDC 0568-73).